The primary structure comprises 326 residues: ATP synthase gamma chain (326 aa).

This sequence belongs to the ATPase gamma chain family. As to quaternary structure, F-type ATPases have 2 components, CF(1) - the catalytic core - and CF(0) - the membrane proton channel. CF(1) has five subunits: alpha(3), beta(3), gamma(1), delta(1), epsilon(1). CF(0) has three main subunits: a, b and c.

It localises to the cell membrane. Its function is as follows. Produces ATP from ADP in the presence of a proton gradient across the membrane. The gamma chain is believed to be important in regulating ATPase activity and the flow of protons through the CF(0) complex. The chain is ATP synthase gamma chain from Corynebacterium jeikeium (strain K411).